We begin with the raw amino-acid sequence, 192 residues long: uncharacterized protein (192 aa).

The region spanning 29-160 (QRQAAVLVPV…PLDIHRRGNH (132 aa)) is the Nudix hydrolase domain. Residues 67–89 (GAVDDTDASLIAAALREAQEEVA) carry the Nudix box motif. Mg(2+) contacts are provided by glutamate 83 and glutamate 87.

The protein belongs to the Nudix hydrolase family. PCD1 subfamily. Requires Mn(2+) as cofactor. Mg(2+) serves as cofactor.

Functionally, probably mediates the hydrolysis of some nucleoside diphosphate derivatives. This is an uncharacterized protein from Cronobacter sakazakii (strain ATCC BAA-894) (Enterobacter sakazakii).